Consider the following 195-residue polypeptide: 2-amino-4-hydroxy-6-hydroxymethyldihydropteridine pyrophosphokinase (195 aa).

Belongs to the HPPK family.

It catalyses the reaction 6-hydroxymethyl-7,8-dihydropterin + ATP = (7,8-dihydropterin-6-yl)methyl diphosphate + AMP + H(+). The protein operates within cofactor biosynthesis; tetrahydrofolate biosynthesis; 2-amino-4-hydroxy-6-hydroxymethyl-7,8-dihydropteridine diphosphate from 7,8-dihydroneopterin triphosphate: step 4/4. Catalyzes the transfer of pyrophosphate from adenosine triphosphate (ATP) to 6-hydroxymethyl-7,8-dihydropterin, an enzymatic step in folate biosynthesis pathway. The polypeptide is 2-amino-4-hydroxy-6-hydroxymethyldihydropteridine pyrophosphokinase (folK) (Synechocystis sp. (strain ATCC 27184 / PCC 6803 / Kazusa)).